Consider the following 121-residue polypeptide: UPF0102 protein AAur_2443 (121 aa).

The protein belongs to the UPF0102 family.

The protein is UPF0102 protein AAur_2443 of Paenarthrobacter aurescens (strain TC1).